Consider the following 351-residue polypeptide: Bifunctional UDP-glucose 4-epimerase and UDP-xylose 4-epimerase 3 (351 aa).

An NAD(+)-binding site is contributed by 8 to 39 (NILVTGGAGFIGTHTVVQLLNQGFKVTIIDNL). Ser134 is a binding site for substrate. Residue Tyr158 is the Proton acceptor of the active site.

Belongs to the NAD(P)-dependent epimerase/dehydratase family. In terms of assembly, homodimer. Heterodimer. It depends on NAD(+) as a cofactor. In terms of tissue distribution, ubiquitous.

It carries out the reaction UDP-alpha-D-glucose = UDP-alpha-D-galactose. The enzyme catalyses UDP-beta-L-arabinopyranose = UDP-alpha-D-xylose. It functions in the pathway carbohydrate metabolism; galactose metabolism. The protein operates within nucleotide-sugar biosynthesis; UDP-L-arabinose biosynthesis; UDP-L-arabinose from UDP-alpha-D-xylose: step 1/1. It participates in cell wall biogenesis; cell wall polysaccharide biosynthesis. With respect to regulation, strongly inhibited by UDP. Its function is as follows. Catalyzes the interconversion between UDP-glucose and UDP-galactose and the interconversion between UDP-arabinose and UDP-xylose. Cooperates with UGE2 in pollen development. May preferentially act in the UDP-galactose to UDP-glucose direction, therefore displaying a role in carbohydrate catabolism. In Arabidopsis thaliana (Mouse-ear cress), this protein is Bifunctional UDP-glucose 4-epimerase and UDP-xylose 4-epimerase 3 (UGE3).